Reading from the N-terminus, the 168-residue chain is UPF0114 protein PC1_0431 (168 aa).

The next 3 membrane-spanning stretches (helical) occupy residues 15–35 (LLAPVYLGLSLGLLALAIKFF), 53–73 (LVLVLLSLIDMTLVGGLLVMV), and 136–156 (LMWYVIIHLTFVLSALVMGYL).

The protein belongs to the UPF0114 family.

Its subcellular location is the cell membrane. This is UPF0114 protein PC1_0431 from Pectobacterium carotovorum subsp. carotovorum (strain PC1).